The sequence spans 115 residues: Large ribosomal subunit protein bL19 (115 aa).

It belongs to the bacterial ribosomal protein bL19 family.

This protein is located at the 30S-50S ribosomal subunit interface and may play a role in the structure and function of the aminoacyl-tRNA binding site. The polypeptide is Large ribosomal subunit protein bL19 (rplS) (Thermotoga maritima (strain ATCC 43589 / DSM 3109 / JCM 10099 / NBRC 100826 / MSB8)).